Reading from the N-terminus, the 305-residue chain is Thioredoxin reductase (305 aa).

Position 28–35 (Leu-28–Gln-35) interacts with FAD. Cys-129 and Cys-132 are disulfide-bonded. An FAD-binding site is contributed by Asp-272–Ala-281.

Belongs to the class-II pyridine nucleotide-disulfide oxidoreductase family. Homodimer. It depends on FAD as a cofactor.

It localises to the cytoplasm. The enzyme catalyses [thioredoxin]-dithiol + NADP(+) = [thioredoxin]-disulfide + NADPH + H(+). This Spironucleus barkhanus protein is Thioredoxin reductase (TRXB).